A 165-amino-acid chain; its full sequence is Chorismate pyruvate-lyase (165 aa).

Residues Met35, Arg77, Leu115, and Glu156 each contribute to the substrate site.

This sequence belongs to the UbiC family. In terms of assembly, monomer.

Its subcellular location is the cytoplasm. The catalysed reaction is chorismate = 4-hydroxybenzoate + pyruvate. Its pathway is cofactor biosynthesis; ubiquinone biosynthesis. Functionally, removes the pyruvyl group from chorismate, with concomitant aromatization of the ring, to provide 4-hydroxybenzoate (4HB) for the ubiquinone pathway. In Salmonella gallinarum (strain 287/91 / NCTC 13346), this protein is Chorismate pyruvate-lyase.